The following is a 169-amino-acid chain: ATP synthase subunit b (169 aa).

Residues 11-31 traverse the membrane as a helical segment; that stretch reads IPSFIAQIVNFGLLLGLLYLF.

The protein belongs to the ATPase B chain family. In terms of assembly, F-type ATPases have 2 components, F(1) - the catalytic core - and F(0) - the membrane proton channel. F(1) has five subunits: alpha(3), beta(3), gamma(1), delta(1), epsilon(1). F(0) has three main subunits: a(1), b(2) and c(10-14). The alpha and beta chains form an alternating ring which encloses part of the gamma chain. F(1) is attached to F(0) by a central stalk formed by the gamma and epsilon chains, while a peripheral stalk is formed by the delta and b chains.

The protein resides in the cell membrane. In terms of biological role, f(1)F(0) ATP synthase produces ATP from ADP in the presence of a proton or sodium gradient. F-type ATPases consist of two structural domains, F(1) containing the extramembraneous catalytic core and F(0) containing the membrane proton channel, linked together by a central stalk and a peripheral stalk. During catalysis, ATP synthesis in the catalytic domain of F(1) is coupled via a rotary mechanism of the central stalk subunits to proton translocation. Functionally, component of the F(0) channel, it forms part of the peripheral stalk, linking F(1) to F(0). The sequence is that of ATP synthase subunit b from Dehalococcoides mccartyi (strain ATCC BAA-2100 / JCM 16839 / KCTC 5957 / BAV1).